The chain runs to 691 residues: Pentatricopeptide repeat-containing protein At4g37170 (691 aa).

PPR repeat units lie at residues 84–118 (PASTYCNLIQVCSQTRALEEGKKVHEHIRTSGFVP), 119–149 (GIVIWNRLLRMYAKCGSLVDARKVFDEMPNR), 150–184 (DLCSWNVMVNGYAEVGLLEEARKLFDEMTEKDSYS), 185–211 (WTAMVTGYVKKDQPEEALVLYSLMQRV), 217–251 (NIFTVSIAVAAAAAVKCIRRGKEIHGHIVRAGLDS), 252–286 (DEVLWSSLMDMYGKCGCIDEARNIFDKIVEKDVVS), 287–317 (WTSMIDRYFKSSRWREGFSLFSELVGSCERP), 318–352 (NEYTFAGVLNACADLTTEELGKQVHGYMTRVGFDP), 353–383 (YSFASSSLVDMYTKCGNIESAKHVVDGCPKP), 384–418 (DLVSWTSLIGGCAQNGQPDEALKYFDLLLKSGTKP), 419–449 (DHVTFVNVLSACTHAGLVEKGLEFFYSITEK), and 455–485 (TSDHYTCLVDLLARSGRFEQLKSVISEMPMK). Residues 490–565 (LWASVLGGCS…RPGSSWTEIK (76 aa)) are type E motif. Positions 566–596 (RKRHVFIAADTSHPMYNQIVEFLRELRKKMK) are type E(+) motif. A type DYW motif region spans residues 597–691 (EEGYVPATSL…NGQCSCGDYW (95 aa)).

Belongs to the PPR family. PCMP-H subfamily.

This Arabidopsis thaliana (Mouse-ear cress) protein is Pentatricopeptide repeat-containing protein At4g37170 (PCMP-H5).